The sequence spans 205 residues: Pyridoxal 5'-phosphate synthase subunit PdxT (205 aa).

54-56 is an L-glutamine binding site; the sequence is GES. Residue cysteine 86 is the Nucleophile of the active site. L-glutamine-binding positions include arginine 118 and 147–148; that span reads IR. Active-site charge relay system residues include histidine 183 and glutamate 185.

It belongs to the glutaminase PdxT/SNO family. As to quaternary structure, in the presence of PdxS, forms a dodecamer of heterodimers. Only shows activity in the heterodimer.

The enzyme catalyses aldehydo-D-ribose 5-phosphate + D-glyceraldehyde 3-phosphate + L-glutamine = pyridoxal 5'-phosphate + L-glutamate + phosphate + 3 H2O + H(+). The catalysed reaction is L-glutamine + H2O = L-glutamate + NH4(+). It participates in cofactor biosynthesis; pyridoxal 5'-phosphate biosynthesis. Its function is as follows. Catalyzes the hydrolysis of glutamine to glutamate and ammonia as part of the biosynthesis of pyridoxal 5'-phosphate. The resulting ammonia molecule is channeled to the active site of PdxS. This is Pyridoxal 5'-phosphate synthase subunit PdxT from Nitrosopumilus maritimus (strain SCM1).